A 169-amino-acid chain; its full sequence is Inorganic pyrophosphatase (169 aa).

Substrate is bound by residues K26, R40, and Y52. Mg(2+)-binding residues include D62, D67, and D99. Y138 is a binding site for substrate.

Belongs to the PPase family. In terms of assembly, homohexamer. Requires Mg(2+) as cofactor.

It is found in the cytoplasm. It catalyses the reaction diphosphate + H2O = 2 phosphate + H(+). Its function is as follows. Catalyzes the hydrolysis of inorganic pyrophosphate (PPi) forming two phosphate ions. The chain is Inorganic pyrophosphatase from Thermoplasma volcanium (strain ATCC 51530 / DSM 4299 / JCM 9571 / NBRC 15438 / GSS1).